Consider the following 700-residue polypeptide: Putative glutamine-dependent NAD(+) synthetase (700 aa).

The CN hydrolase domain maps to 5-275 (VTIASCQLNQ…VEVISATVDV (271 aa)). E45 serves as the catalytic Proton acceptor; for glutaminase activity. Catalysis depends on K114, which acts as the For glutaminase activity. C175 (nucleophile; for glutaminase activity) is an active-site residue. The segment at 327 to 700 (IPLPEEEITF…ASKFEQHQRK (374 aa)) is ligase. 357-364 (PLSGGLDS) contributes to the ATP binding site. Residue S359 is part of the active site.

The protein in the C-terminal section; belongs to the NAD synthetase family.

The catalysed reaction is deamido-NAD(+) + L-glutamine + ATP + H2O = L-glutamate + AMP + diphosphate + NAD(+) + H(+). The protein operates within cofactor biosynthesis; NAD(+) biosynthesis; NAD(+) from deamido-NAD(+) (L-Gln route): step 1/1. The sequence is that of Putative glutamine-dependent NAD(+) synthetase from Schizosaccharomyces pombe (strain 972 / ATCC 24843) (Fission yeast).